Here is a 230-residue protein sequence, read N- to C-terminus: Large ribosomal subunit protein uL1 (230 aa).

Belongs to the universal ribosomal protein uL1 family. In terms of assembly, part of the 50S ribosomal subunit.

Functionally, binds directly to 23S rRNA. The L1 stalk is quite mobile in the ribosome, and is involved in E site tRNA release. Protein L1 is also a translational repressor protein, it controls the translation of the L11 operon by binding to its mRNA. The chain is Large ribosomal subunit protein uL1 from Leptospira borgpetersenii serovar Hardjo-bovis (strain L550).